The chain runs to 257 residues: Zinc uptake system ATP-binding protein ZurA (257 aa).

The ABC transporter domain maps to 5–241 (IEVNNVSYHY…ADRELEILAE (237 aa)). An ATP-binding site is contributed by 37-44 (GPNGSGKS).

The protein belongs to the ABC transporter superfamily.

Functionally, involved in a zinc uptake transport system. The polypeptide is Zinc uptake system ATP-binding protein ZurA (zurA) (Listeria innocua serovar 6a (strain ATCC BAA-680 / CLIP 11262)).